The chain runs to 486 residues: Protein kinase C and casein kinase substrate in neurons protein 2 (486 aa).

Residues 11–282 (VEVSSDSFWE…SIKAADAVED (272 aa)) form the F-BAR domain. A coiled-coil region spans residues 25 to 274 (KRTVKRIDDG…TIYRELEQSI (250 aa)). K53 is modified (N6-acetyllysine). S273 is modified (phosphoserine). At S313 the chain carries Phosphoserine; by PKC. The tract at residues 315–426 (REKKKAVDGV…NPFDEDTTSG (112 aa)) is disordered. Residues 327–362 (TGINQTGDQSGQNKPGSNLSVPSNPAQSTQLQSSYN) are compositionally biased toward polar residues. The NPF1 signature appears at 362–364 (NPF). A Phosphoserine; by IKKB modification is found at S373. Residues 384 to 396 (NVSSYEKTQTYPT) show a composition bias toward polar residues. S399 bears the Phosphoserine mark. Positions 404–416 (NNPFSSTDANGDS) are enriched in polar residues. The NPF2 signature appears at 405-407 (NPF). The NPF3 signature appears at 417–419 (NPF). One can recognise an SH3 domain in the interval 426 to 486 (GTEVRVRALY…YPANYVEAIQ (61 aa)). The residue at position 446 (S446) is a Phosphoserine.

Belongs to the PACSIN family. In terms of assembly, homodimer. May form heterooligomers with other PACSINs. Interacts (via NPF motifs) with EHD1 (via EH domain). Interacts (via NPF motifs) with EHD2 (via EH domain); this interaction probably stabilizes the caveolae. Interacts with EHD3. Interacts (via the SH3 domain) with MICALL1. Interacts with RAC1. Interacts (via SH3 domain) with DNM1, SYN1, SYNJ1 and WASL. Interacts (via F-BAR domain) with CAV1; this interaction induces membrane tubulation. Interacts with TRPV4. Forms a complex with EHD4 and MICALL1; the complex controls CDH5 trafficking and coordinates angiogenesis. Phosphorylated by casein kinase 2 (CK2). Phosphorylation by PKC probably decreases the membrane binding and tubulation capacities of PACSIN2, thereby modulating the lifetime of caveolae. Widely expressed (at protein level).

It is found in the cytoplasm. It localises to the cytoskeleton. The protein resides in the cytoplasmic vesicle membrane. Its subcellular location is the cell projection. The protein localises to the ruffle membrane. It is found in the early endosome. It localises to the recycling endosome membrane. The protein resides in the cell membrane. Its subcellular location is the membrane. The protein localises to the caveola. It is found in the cell junction. It localises to the adherens junction. Functionally, regulates the morphogenesis and endocytosis of caveolae. Lipid-binding protein that is able to promote the tubulation of the phosphatidic acid-containing membranes it preferentially binds. Plays a role in intracellular vesicle-mediated transport. Involved in the endocytosis of cell-surface receptors like the EGF receptor, contributing to its internalization in the absence of EGF stimulus. Essential for endothelial organization in sprouting angiogenesis, modulates CDH5-based junctions. Facilitates endothelial front-rear polarity during migration by recruiting EHD4 and MICALL1 to asymmetric adherens junctions between leader and follower cells. This chain is Protein kinase C and casein kinase substrate in neurons protein 2 (Pacsin2), found in Mus musculus (Mouse).